A 265-amino-acid chain; its full sequence is Tryptophan synthase alpha chain (265 aa).

Active-site proton acceptor residues include Glu47 and Asp58.

Belongs to the TrpA family. As to quaternary structure, tetramer of two alpha and two beta chains.

The enzyme catalyses (1S,2R)-1-C-(indol-3-yl)glycerol 3-phosphate + L-serine = D-glyceraldehyde 3-phosphate + L-tryptophan + H2O. It functions in the pathway amino-acid biosynthesis; L-tryptophan biosynthesis; L-tryptophan from chorismate: step 5/5. Its function is as follows. The alpha subunit is responsible for the aldol cleavage of indoleglycerol phosphate to indole and glyceraldehyde 3-phosphate. This chain is Tryptophan synthase alpha chain, found in Methanoregula boonei (strain DSM 21154 / JCM 14090 / 6A8).